We begin with the raw amino-acid sequence, 346 residues long: Small ribosomal subunit biogenesis GTPase RsgA (346 aa).

The tract at residues 1–26 is disordered; the sequence is MAKRKLTQNQTRRIQSNNAKTLHRHK. Over residues 7-20 the composition is skewed to polar residues; sequence TQNQTRRIQSNNAK. Positions 103–271 constitute a CP-type G domain; sequence ENEISRPDYY…LIDSPGIREF (169 aa). GTP-binding positions include 159-162 and 213-221; these read NKVD and GQSGVGKSS. The Zn(2+) site is built by cysteine 295, cysteine 300, histidine 302, and cysteine 308.

The protein belongs to the TRAFAC class YlqF/YawG GTPase family. RsgA subfamily. In terms of assembly, monomer. Associates with 30S ribosomal subunit, binds 16S rRNA. Zn(2+) serves as cofactor.

It localises to the cytoplasm. Its function is as follows. One of several proteins that assist in the late maturation steps of the functional core of the 30S ribosomal subunit. Helps release RbfA from mature subunits. May play a role in the assembly of ribosomal proteins into the subunit. Circularly permuted GTPase that catalyzes slow GTP hydrolysis, GTPase activity is stimulated by the 30S ribosomal subunit. This is Small ribosomal subunit biogenesis GTPase RsgA from Haemophilus influenzae (strain 86-028NP).